The sequence spans 171 residues: ATP synthase subunit b (171 aa).

The helical transmembrane segment at 31 to 51 (FFVVLAIFLVVLAVIGTFVVP) threads the bilayer.

Belongs to the ATPase B chain family. As to quaternary structure, F-type ATPases have 2 components, F(1) - the catalytic core - and F(0) - the membrane proton channel. F(1) has five subunits: alpha(3), beta(3), gamma(1), delta(1), epsilon(1). F(0) has three main subunits: a(1), b(2) and c(10-14). The alpha and beta chains form an alternating ring which encloses part of the gamma chain. F(1) is attached to F(0) by a central stalk formed by the gamma and epsilon chains, while a peripheral stalk is formed by the delta and b chains.

Its subcellular location is the cell membrane. Its function is as follows. F(1)F(0) ATP synthase produces ATP from ADP in the presence of a proton or sodium gradient. F-type ATPases consist of two structural domains, F(1) containing the extramembraneous catalytic core and F(0) containing the membrane proton channel, linked together by a central stalk and a peripheral stalk. During catalysis, ATP synthesis in the catalytic domain of F(1) is coupled via a rotary mechanism of the central stalk subunits to proton translocation. Functionally, component of the F(0) channel, it forms part of the peripheral stalk, linking F(1) to F(0). In Mycobacterium bovis (strain ATCC BAA-935 / AF2122/97), this protein is ATP synthase subunit b.